The following is a 1219-amino-acid chain: MGSPESEVSPDVQEQEAATDNPEVFEEDSADAAEGEDQIEQEEPPNCDEEAYNRDAAAATMQVGEDLGEEGDHVQEDPAEESCQIIPFESDSVEEDFSPTLTENPYEIFPTESTSFCNNTYSLDESANGHEPVCEICVEEVPGVGPPLNQHDSLPDGSGEDSPVVPDVVVVPENEGPVDDALSSPYVMGVGLLSLGEGAQSDTQAASGTLSGYSTWEEGDSEGGQVPVDRKNIATRARPHSGKVAGHVPETVLEETGPETCSSGMGIRDTSDEVRKIGILPEGKPPECVRALPAKPRAFTLYPRSFSVEGRESPLSMFREPEGAGLDSHRVRRKEDNLSLPGAIGSSGSFSQRSHLPSSGTSTPSSVVDIPPPFDLACITKKPITKSSPSLLIDGDTLEKASKKKKSSFKRFLELTFRKKTESKVHVDMNLSSSRSSSESSYHGPARVLELDRRSLSNSPQLKCRTGKLRASDSPAALIFYRDSKRKGVPFSRTVSRVESFEDRSRPPFLPLPLTKPRSISFPNADTSDYENIPAMNSDYENIQIPPRRPVRTGTFTKLFEEQSRALSTANENDGYVDMSSFNAFESKQQSSEQEAESAYTEPYKVCPISAAPREDLTSDEEQGSSEEEDSASRDPSLSHKGEGQSRALVIAQELLSSEKAYVQMLQHLSLDFHGAVLRALENVEQEGREPLAQEELRQGLRELPAICDLHQGILESLEQRLGDCGEGQPQVADIFLAREQEFEHHAAHILQFDRYLGLLAESCLLSPRLATTVREFEQSSQGGGQSMKHRMLRVVQRLFQYQVLLTDYLNNLCPDSAEYDNTQSALTLISKVTDRANESMEQGENLQKLVHIEYSVRGQGDLLQPGREFLKEGTLMRVRGKSRHPRHLFLMNDTLLYTHPQKDGKYRLKSSLPVANMKVSRPVMDKVPYALKIETPESCLTLSASSCAERDEWHYCLSRALPEDYKTQALAAFHHSVEIRERLGISLGERLPTLVPVTHAMMCMNCGCDFSLTVRRHHCHACGKIVCRNCSRNKYPLKCLKNRMAKVCDGCFRELKLRNGPVPGSMRERPVSMSFPLSSSRFSSGSALSSVFQSISPSTFKKQKKVPSALSEVAASGEGSAISGYLSRCKSGKRRWKKLWLVIKGKVLYTYLASEDKVAMESIPLLGFTIAPEKEEGSSEVGPVFHLYHKKTLFYSFKAEDSNSAQRWMEAMEDASVL.

4 disordered regions span residues 1 to 85 (MGSP…SCQI), 94 to 113 (EEDF…PTES), 201 to 227 (SDTQ…GQVP), and 310 to 367 (GRES…PSSV). The segment covering 23-50 (EVFEEDSADAAEGEDQIEQEEPPNCDEE) has biased composition (acidic residues). Positions 201–214 (SDTQAASGTLSGYS) are enriched in polar residues. Positions 319-337 (REPEGAGLDSHRVRRKEDN) are enriched in basic and acidic residues. Residues 346–356 (SSGSFSQRSHL) are compositionally biased toward polar residues. The segment covering 357–367 (PSSGTSTPSSV) has biased composition (low complexity). Threonine 555 carries the post-translational modification Phosphothreonine. Positions 586–599 (ESKQQSSEQEAESA) are enriched in low complexity. The tract at residues 586–644 (ESKQQSSEQEAESAYTEPYKVCPISAAPREDLTSDEEQGSSEEEDSASRDPSLSHKGEG) is disordered. Residues 618 to 630 (TSDEEQGSSEEED) show a composition bias toward acidic residues. The segment covering 631–644 (SASRDPSLSHKGEG) has biased composition (basic and acidic residues). A DH domain is found at 647–840 (RALVIAQELL…SKVTDRANES (194 aa)). A PH 1 domain is found at 869–963 (EFLKEGTLMR…WHYCLSRALP (95 aa)). The segment at 998 to 1057 (VTHAMMCMNCGCDFSLTVRRHHCHACGKIVCRNCSRNKYPLKCLKNRMAKVCDGCFRELK) adopts an FYVE-type zinc-finger fold. Zn(2+)-binding residues include cysteine 1004, cysteine 1007, cysteine 1020, cysteine 1023, cysteine 1028, cysteine 1031, cysteine 1049, and cysteine 1052. One can recognise a PH 2 domain in the interval 1120-1218 (GSAISGYLSR…WMEAMEDASV (99 aa)).

In terms of tissue distribution, expressed in highly vascularized tissues, such as lung, kidney and ovary.

The protein resides in the cytoplasm. It is found in the cytoskeleton. Its subcellular location is the cell projection. The protein localises to the ruffle membrane. It localises to the endoplasmic reticulum. The protein resides in the golgi apparatus. It is found in the early endosome. Activates CDC42, a member of the Ras-like family of Rho- and Rac proteins, by exchanging bound GDP for free GTP. Mediates VEGF-induced CDC42 activation. May regulate proangiogenic action of VEGF in vascular endothelial cells, including network formation, directional movement and proliferation. May play a role in regulating the actin cytoskeleton and cell shape. The polypeptide is FYVE, RhoGEF and PH domain-containing protein 5 (Fgd5) (Mus musculus (Mouse)).